A 372-amino-acid chain; its full sequence is Fatty acid 2-hydroxylase (372 aa).

The Cytochrome b5 heme-binding domain occupies 8–86 (AASFTSAEVQ…LEQYYVGELR (79 aa)). Heme contacts are provided by His43 and His69. The next 2 helical transmembrane spans lie at 168–188 (VWYS…WSYY) and 213–233 (SVFI…EYLI). The Fatty acid hydroxylase domain maps to 219–361 (FVLGMLIWTL…TKLWDYFFHT (143 aa)). Residues His234, His239, His257, His260, and His261 each coordinate Zn(2+). The next 2 membrane-spanning stretches (helical) occupy residues 268 to 288 (SRLV…YVFL) and 290 to 310 (LILP…GYVL). Zn(2+) contacts are provided by His315, His319, His336, His339, and His340.

Belongs to the sterol desaturase family. SCS7 subfamily. Zn(2+) serves as cofactor. In terms of tissue distribution, detected in oligodendrocytes (at protein level). Detected in sciatic nerve.

It is found in the endoplasmic reticulum membrane. The protein resides in the microsome membrane. It catalyses the reaction a 1,2-saturated fatty acid + 2 Fe(II)-[cytochrome b5] + O2 + 2 H(+) = a (R)-2-hydroxy fatty acid + 2 Fe(III)-[cytochrome b5] + H2O. The enzyme catalyses hexadecanoate + 2 Fe(II)-[cytochrome b5] + O2 + 2 H(+) = (R)-2-hydroxyhexadecanoate + 2 Fe(III)-[cytochrome b5] + H2O. The catalysed reaction is octadecanoate + 2 Fe(II)-[cytochrome b5] + O2 + 2 H(+) = (R)-2-hydroxyoctadecanoate + 2 Fe(III)-[cytochrome b5] + H2O. It carries out the reaction docosanoate + 2 Fe(II)-[cytochrome b5] + O2 + 2 H(+) = 2-hydroxydocosanoate + 2 Fe(III)-[cytochrome b5] + H2O. It catalyses the reaction tetracosanoate + 2 Fe(II)-[cytochrome b5] + O2 + 2 H(+) = (R)-2-hydroxytetracosanoate + 2 Fe(III)-[cytochrome b5] + H2O. The protein operates within lipid metabolism; fatty acid metabolism. Its pathway is sphingolipid metabolism; galactosylceramide biosynthesis. Its function is as follows. Catalyzes the hydroxylation of free fatty acids at the C-2 position to produce 2-hydroxy fatty acids, which are building blocks of sphingolipids and glycosphingolipids common in neural tissue and epidermis. FA2H is stereospecific for the production of (R)-2-hydroxy fatty acids. Plays an essential role in the synthesis of galactosphingolipids of the myelin sheath. Responsible for the synthesis of sphingolipids and glycosphingolipids involved in the formation of epidermal lamellar bodies critical for skin permeability barrier. Participates in the synthesis of glycosphingolipids and a fraction of type II wax diesters in sebaceous gland, specifically regulating hair follicle homeostasis. Involved in the synthesis of sphingolipids of plasma membrane rafts, controlling lipid raft mobility and trafficking of raft-associated proteins. The chain is Fatty acid 2-hydroxylase from Rattus norvegicus (Rat).